A 137-amino-acid polypeptide reads, in one-letter code: MLVPKRVKHRREFRGKMRGEAKGGKEVSFGEYGLQATTSHWITNRQIEAARIAMTRYMKRGGKVWIKIFPHKSYTAKAIGVRMGSGKGAPEGWVAPVKRGKVMFEIAGVSEEIAREALRLASHKLPVKCKFVKREAE.

It belongs to the universal ribosomal protein uL16 family. Part of the 50S ribosomal subunit.

Functionally, binds 23S rRNA and is also seen to make contacts with the A and possibly P site tRNAs. The protein is Large ribosomal subunit protein uL16 of Streptococcus pyogenes serotype M1.